Consider the following 130-residue polypeptide: Small ribosomal subunit protein uS8 (130 aa).

Belongs to the universal ribosomal protein uS8 family. Part of the 30S ribosomal subunit. Contacts proteins S5 and S12.

Its function is as follows. One of the primary rRNA binding proteins, it binds directly to 16S rRNA central domain where it helps coordinate assembly of the platform of the 30S subunit. This is Small ribosomal subunit protein uS8 from Yersinia pseudotuberculosis serotype O:1b (strain IP 31758).